The sequence spans 493 residues: Guanosine-5'-triphosphate,3'-diphosphate pyrophosphatase (493 aa).

This sequence belongs to the GppA/Ppx family. GppA subfamily.

The catalysed reaction is guanosine 3'-diphosphate 5'-triphosphate + H2O = guanosine 3',5'-bis(diphosphate) + phosphate + H(+). Its pathway is purine metabolism; ppGpp biosynthesis; ppGpp from GTP: step 2/2. Catalyzes the conversion of pppGpp to ppGpp. Guanosine pentaphosphate (pppGpp) is a cytoplasmic signaling molecule which together with ppGpp controls the 'stringent response', an adaptive process that allows bacteria to respond to amino acid starvation, resulting in the coordinated regulation of numerous cellular activities. The chain is Guanosine-5'-triphosphate,3'-diphosphate pyrophosphatase from Salmonella paratyphi B (strain ATCC BAA-1250 / SPB7).